The primary structure comprises 544 residues: CTP synthase (544 aa).

The amidoligase domain stretch occupies residues 1-266 (MKYIFVTGGV…GKAVEELLGL (266 aa)). Serine 12 contacts CTP. A UTP-binding site is contributed by serine 12. Position 13 to 18 (13 to 18 (SLGKGV)) interacts with ATP. Tyrosine 53 contacts L-glutamine. Aspartate 70 is a binding site for ATP. The Mg(2+) site is built by aspartate 70 and glutamate 140. CTP is bound by residues 147-149 (DIE), 187-192 (KTKPTQ), and lysine 223. Residues 187–192 (KTKPTQ) and lysine 223 contribute to the UTP site. Residues 291–544 (TIAIAGKYTA…VKAALEHQQQ (254 aa)) enclose the Glutamine amidotransferase type-1 domain. Glycine 356 contacts L-glutamine. The active-site Nucleophile; for glutamine hydrolysis is cysteine 383. L-glutamine-binding positions include 384-387 (LGMQ), glutamate 407, and arginine 467. Catalysis depends on residues histidine 517 and glutamate 519.

It belongs to the CTP synthase family. In terms of assembly, homotetramer.

It catalyses the reaction UTP + L-glutamine + ATP + H2O = CTP + L-glutamate + ADP + phosphate + 2 H(+). The enzyme catalyses L-glutamine + H2O = L-glutamate + NH4(+). The catalysed reaction is UTP + NH4(+) + ATP = CTP + ADP + phosphate + 2 H(+). Its pathway is pyrimidine metabolism; CTP biosynthesis via de novo pathway; CTP from UDP: step 2/2. Its activity is regulated as follows. Allosterically activated by GTP, when glutamine is the substrate; GTP has no effect on the reaction when ammonia is the substrate. The allosteric effector GTP functions by stabilizing the protein conformation that binds the tetrahedral intermediate(s) formed during glutamine hydrolysis. Inhibited by the product CTP, via allosteric rather than competitive inhibition. In terms of biological role, catalyzes the ATP-dependent amination of UTP to CTP with either L-glutamine or ammonia as the source of nitrogen. Regulates intracellular CTP levels through interactions with the four ribonucleotide triphosphates. This chain is CTP synthase, found in Deinococcus radiodurans (strain ATCC 13939 / DSM 20539 / JCM 16871 / CCUG 27074 / LMG 4051 / NBRC 15346 / NCIMB 9279 / VKM B-1422 / R1).